A 196-amino-acid chain; its full sequence is Serine recombinase PinR (196 aa).

The 141-residue stretch at arginine 3–glycine 143 folds into the Resolvase/invertase-type recombinase catalytic domain. Serine 11 acts as the O-(5'-phospho-DNA)-serine intermediate in catalysis.

The protein belongs to the site-specific recombinase resolvase family.

The sequence is that of Serine recombinase PinR (pinR) from Escherichia coli (strain K12).